The chain runs to 193 residues: Peptide deformylase 2 (193 aa).

The Fe cation site is built by Cys100 and His142. Glu143 is a catalytic residue. His146 serves as a coordination point for Fe cation.

Belongs to the polypeptide deformylase family. The cofactor is Fe(2+).

The enzyme catalyses N-terminal N-formyl-L-methionyl-[peptide] + H2O = N-terminal L-methionyl-[peptide] + formate. In terms of biological role, removes the formyl group from the N-terminal Met of newly synthesized proteins. Requires at least a dipeptide for an efficient rate of reaction. N-terminal L-methionine is a prerequisite for activity but the enzyme has broad specificity at other positions. In Corynebacterium efficiens (strain DSM 44549 / YS-314 / AJ 12310 / JCM 11189 / NBRC 100395), this protein is Peptide deformylase 2.